The chain runs to 383 residues: Small ribosomal subunit protein mS31 (383 aa).

The transit peptide at 1 to 21 (MLRSLCSIAVRLGGARQPRLL) directs the protein to the mitochondrion. Residues 158 to 187 (VNEAQIKLQEQRKALLNDVREKVEQEEVEE) are a coiled coil.

It belongs to the mitochondrion-specific ribosomal protein mS31 family. In terms of assembly, component of the mitochondrial ribosome small subunit (28S) which comprises a 12S rRNA and about 30 distinct proteins.

It is found in the mitochondrion. The chain is Small ribosomal subunit protein mS31 (mrps-31) from Caenorhabditis elegans.